The primary structure comprises 306 residues: Putative dihydroorotate dehydrogenase A (fumarate) (306 aa).

FMN-binding positions include S24 and 48–49 (KS). Residues K48, 72 to 76 (NAVGL), and N129 contribute to the substrate site. An FMN-binding site is contributed by N129. The Nucleophile role is filled by C132. Residues K167 and I192 each coordinate FMN. Substrate is bound at residue 193-194 (NS). FMN contacts are provided by residues G218 and 244–245 (GG).

It belongs to the dihydroorotate dehydrogenase family. Type 1 subfamily. As to quaternary structure, homodimer. FMN is required as a cofactor.

It localises to the cytoplasm. It catalyses the reaction (S)-dihydroorotate + fumarate = orotate + succinate. Its pathway is pyrimidine metabolism; UMP biosynthesis via de novo pathway. In terms of biological role, catalyzes the conversion of dihydroorotate to orotate with fumarate as the electron acceptor. The chain is Putative dihydroorotate dehydrogenase A (fumarate) (pyrD) from Aeropyrum pernix (strain ATCC 700893 / DSM 11879 / JCM 9820 / NBRC 100138 / K1).